The primary structure comprises 438 residues: MENDMETATMTQDYHIANINLADWGRKEIEIAETEMPGLMALRKKYKNAKPLKGARIAGCIHMTIQTAVLIETLMLLGAEVRWSSCNIFSTQDHAAAALAQKGIPIFAWKGETEEEYWRCIASTLEGPKGWTPNLLLDDGGDLTAHTLQKHPELCQNIRGVSEETTTGVHRLYRMLKEGSLKFPAINVNDSVTKSKFDNLYGCRESLIDSIKRATDVMIAGKRVVVCGYGDVGKGCAQSLRAYGATVYITEIDPICALQAAMEGYRVVTMDEMADSADIFVTATGNTDIITHEHMLKMKDQAIVCNIGHFDNEIDIASLQDYQWMNIKPQVDQVIFPDGKRLTVLAQGRLVNLGCATGHPSFVMSNSFTNQVLAQIELWQYPEKYPIGVYVLPKHLDEEVARLHLERVGGKLTTLTEKQADYIGVDPEGPFKSEHYRY.

Substrate is bound by residues threonine 64, aspartate 139, and glutamate 164. 165-167 provides a ligand contact to NAD(+); that stretch reads TTT. Substrate is bound by residues lysine 194 and aspartate 198. NAD(+) is bound by residues asparagine 199, 228-233, glutamate 251, asparagine 286, 307-309, and asparagine 352; these read GYGDVG and IGH.

The protein belongs to the adenosylhomocysteinase family. NAD(+) is required as a cofactor.

It is found in the cytoplasm. The enzyme catalyses S-adenosyl-L-homocysteine + H2O = L-homocysteine + adenosine. Its pathway is amino-acid biosynthesis; L-homocysteine biosynthesis; L-homocysteine from S-adenosyl-L-homocysteine: step 1/1. May play a key role in the regulation of the intracellular concentration of adenosylhomocysteine. This is Adenosylhomocysteinase from Coxiella burnetii (strain RSA 493 / Nine Mile phase I).